The following is a 430-amino-acid chain: Tol-Pal system protein TolB (430 aa).

Positions 1 to 21 are cleaved as a signal peptide; sequence MKQALRVAVSFFMLWAAVLHA.

It belongs to the TolB family. As to quaternary structure, the Tol-Pal system is composed of five core proteins: the inner membrane proteins TolA, TolQ and TolR, the periplasmic protein TolB and the outer membrane protein Pal. They form a network linking the inner and outer membranes and the peptidoglycan layer.

It localises to the periplasm. In terms of biological role, part of the Tol-Pal system, which plays a role in outer membrane invagination during cell division and is important for maintaining outer membrane integrity. TolB occupies a key intermediary position in the Tol-Pal system because it communicates directly with both membrane-embedded components, Pal in the outer membrane and TolA in the inner membrane. The chain is Tol-Pal system protein TolB from Enterobacter sp. (strain 638).